The chain runs to 585 residues: Glutamate decarboxylase 2 (585 aa).

The segment covering 1–14 (MASPGSGFWSFGSE) has biased composition (low complexity). Positions 1 to 24 (MASPGSGFWSFGSEDGSGDSENPG) are disordered. Phosphoserine is present on residues Ser3, Ser6, Ser10, and Ser13. Residues Cys30 and Cys45 are each lipidated (S-palmitoyl cysteine). 181–183 (QLS) contributes to the substrate binding site. Position 396 is an N6-(pyridoxal phosphate)lysine (Lys396). Arg558 is a binding site for substrate.

The protein belongs to the group II decarboxylase family. Homodimer. The cofactor is pyridoxal 5'-phosphate. In terms of processing, phosphorylated; which does not affect kinetic parameters or subcellular location. Post-translationally, palmitoylated; which is required for presynaptic clustering.

The protein localises to the cytoplasm. Its subcellular location is the cytosol. The protein resides in the cytoplasmic vesicle. It localises to the presynaptic cell membrane. It is found in the golgi apparatus membrane. It carries out the reaction L-glutamate + H(+) = 4-aminobutanoate + CO2. Catalyzes the production of GABA. This chain is Glutamate decarboxylase 2, found in Homo sapiens (Human).